A 275-amino-acid chain; its full sequence is Large ribosomal subunit protein uL2 (275 aa).

The tract at residues Val220–Arg275 is disordered. The span at Pro227–Ala239 shows a compositional bias: basic and acidic residues. Residues Lys249–Asn262 show a composition bias toward basic residues.

The protein belongs to the universal ribosomal protein uL2 family. In terms of assembly, part of the 50S ribosomal subunit. Forms a bridge to the 30S subunit in the 70S ribosome.

Its function is as follows. One of the primary rRNA binding proteins. Required for association of the 30S and 50S subunits to form the 70S ribosome, for tRNA binding and peptide bond formation. It has been suggested to have peptidyltransferase activity; this is somewhat controversial. Makes several contacts with the 16S rRNA in the 70S ribosome. This Roseiflexus sp. (strain RS-1) protein is Large ribosomal subunit protein uL2.